The sequence spans 91 residues: Putative transmembrane protein encoded by LINC00862 (91 aa).

A helical membrane pass occupies residues 49-69 (IMALILMPSLHCFGNILILLF).

It localises to the membrane. This chain is Putative transmembrane protein encoded by LINC00862 (LINC00862), found in Homo sapiens (Human).